Here is a 201-residue protein sequence, read N- to C-terminus: Achaete-scute complex protein T5 (201 aa).

A compositionally biased stretch (polar residues) spans 1 to 10 (MALGSENHSV). The segment at 1–32 (MALGSENHSVFNDDEESSSAFNGPSVIRRNAR) is disordered. The region spanning 24-90 (PSVIRRNARE…KMAVEYIRRL (67 aa)) is the bHLH domain.

In terms of assembly, efficient DNA binding requires dimerization with another bHLH protein. L(1)SC, SC and AC strongly label the presumptive stomatogastric nervous system, while ASE is more prominent in the presumptive procephalic lobe.

Functionally, AS-C proteins are involved in the determination of the neuronal precursors in the peripheral nervous system and the central nervous system. This Drosophila melanogaster (Fruit fly) protein is Achaete-scute complex protein T5 (ac).